The primary structure comprises 425 residues: Dihydroorotase (425 aa).

Zn(2+) contacts are provided by His56 and His58. Residues 58 to 60 and Asn90 contribute to the substrate site; that span reads HYR. Residues Asp148, His175, and His228 each contribute to the Zn(2+) site. Asn274 provides a ligand contact to substrate. Asp301 is a Zn(2+) binding site. Asp301 is an active-site residue. Residues His305 and 319–320 each bind substrate; that span reads FG.

Belongs to the metallo-dependent hydrolases superfamily. DHOase family. Class I DHOase subfamily. The cofactor is Zn(2+).

The enzyme catalyses (S)-dihydroorotate + H2O = N-carbamoyl-L-aspartate + H(+). Its pathway is pyrimidine metabolism; UMP biosynthesis via de novo pathway; (S)-dihydroorotate from bicarbonate: step 3/3. Functionally, catalyzes the reversible cyclization of carbamoyl aspartate to dihydroorotate. In Lactobacillus johnsonii (strain CNCM I-12250 / La1 / NCC 533), this protein is Dihydroorotase.